The sequence spans 364 residues: Popeye domain-containing protein 2 (364 aa).

The N-linked (GlcNAc...) asparagine glycan is linked to Asn4. Helical transmembrane passes span 37 to 57 (LLLGFMGGSGVYGCFYLFGFL) and 77 to 97 (IVLWSFLLAVVCLLQLAHLVY). Positions 276–333 (ADAGPESEKGDEEVCEPAVSPPQATPTSLQQTPPCSTPPATTNFPAPPTRARLSRPDS) are disordered. Residues 300–309 (TPTSLQQTPP) are compositionally biased toward polar residues. Thr361 bears the Phosphothreonine mark.

The protein belongs to the popeye family. In terms of tissue distribution, expressed predominantly in the heart and in the skeletal muscle.

It is found in the membrane. It localises to the cell membrane. The protein resides in the sarcolemma. Functionally, important for the maintenance of cardiac function. Plays a regulatory function in heart rate dynamics mediated, at least in part, through cAMP-binding and, probably, by increasing cell surface expression of the potassium channel KCNK2 and enhancing current density. This Homo sapiens (Human) protein is Popeye domain-containing protein 2 (POPDC2).